The primary structure comprises 105 residues: Nitrogen fixation nifHD region glnB-like protein 1 (105 aa).

Belongs to the P(II) protein family.

Could be involved in the regulation of nitrogen fixation. This is Nitrogen fixation nifHD region glnB-like protein 1 (glnBI) from Methanococcus maripaludis (Methanococcus deltae).